Reading from the N-terminus, the 316-residue chain is 4-hydroxy-3-methylbut-2-enyl diphosphate reductase (316 aa).

Cys12 contributes to the [4Fe-4S] cluster binding site. (2E)-4-hydroxy-3-methylbut-2-enyl diphosphate contacts are provided by His41 and His74. The dimethylallyl diphosphate site is built by His41 and His74. Isopentenyl diphosphate contacts are provided by His41 and His74. A [4Fe-4S] cluster-binding site is contributed by Cys96. Residue His124 participates in (2E)-4-hydroxy-3-methylbut-2-enyl diphosphate binding. His124 provides a ligand contact to dimethylallyl diphosphate. His124 is an isopentenyl diphosphate binding site. The Proton donor role is filled by Glu126. Thr169 lines the (2E)-4-hydroxy-3-methylbut-2-enyl diphosphate pocket. Cys199 serves as a coordination point for [4Fe-4S] cluster. Ser227, Ser228, Asn229, and Ser271 together coordinate (2E)-4-hydroxy-3-methylbut-2-enyl diphosphate. Positions 227, 228, 229, and 271 each coordinate dimethylallyl diphosphate. Isopentenyl diphosphate is bound by residues Ser227, Ser228, Asn229, and Ser271.

Belongs to the IspH family. It depends on [4Fe-4S] cluster as a cofactor.

It carries out the reaction isopentenyl diphosphate + 2 oxidized [2Fe-2S]-[ferredoxin] + H2O = (2E)-4-hydroxy-3-methylbut-2-enyl diphosphate + 2 reduced [2Fe-2S]-[ferredoxin] + 2 H(+). The catalysed reaction is dimethylallyl diphosphate + 2 oxidized [2Fe-2S]-[ferredoxin] + H2O = (2E)-4-hydroxy-3-methylbut-2-enyl diphosphate + 2 reduced [2Fe-2S]-[ferredoxin] + 2 H(+). The protein operates within isoprenoid biosynthesis; dimethylallyl diphosphate biosynthesis; dimethylallyl diphosphate from (2E)-4-hydroxy-3-methylbutenyl diphosphate: step 1/1. Its pathway is isoprenoid biosynthesis; isopentenyl diphosphate biosynthesis via DXP pathway; isopentenyl diphosphate from 1-deoxy-D-xylulose 5-phosphate: step 6/6. Catalyzes the conversion of 1-hydroxy-2-methyl-2-(E)-butenyl 4-diphosphate (HMBPP) into a mixture of isopentenyl diphosphate (IPP) and dimethylallyl diphosphate (DMAPP). Acts in the terminal step of the DOXP/MEP pathway for isoprenoid precursor biosynthesis. This Xanthomonas oryzae pv. oryzae (strain MAFF 311018) protein is 4-hydroxy-3-methylbut-2-enyl diphosphate reductase.